Here is a 266-residue protein sequence, read N- to C-terminus: Hydroxymethylpyrimidine/phosphomethylpyrimidine kinase (266 aa).

4-amino-5-hydroxymethyl-2-methylpyrimidine is bound at residue Gln-44.

Belongs to the ThiD family. In terms of assembly, monomer.

The enzyme catalyses 4-amino-5-hydroxymethyl-2-methylpyrimidine + ATP = 4-amino-2-methyl-5-(phosphooxymethyl)pyrimidine + ADP + H(+). It catalyses the reaction 4-amino-2-methyl-5-(phosphooxymethyl)pyrimidine + ATP = 4-amino-2-methyl-5-(diphosphooxymethyl)pyrimidine + ADP. It participates in cofactor biosynthesis; thiamine diphosphate biosynthesis; 4-amino-2-methyl-5-diphosphomethylpyrimidine from 5-amino-1-(5-phospho-D-ribosyl)imidazole: step 2/3. It functions in the pathway cofactor biosynthesis; thiamine diphosphate biosynthesis; 4-amino-2-methyl-5-diphosphomethylpyrimidine from 5-amino-1-(5-phospho-D-ribosyl)imidazole: step 3/3. In terms of biological role, catalyzes the phosphorylation of hydroxymethylpyrimidine phosphate (HMP-P) to HMP-PP, and of HMP to HMP-P. Shows no activity with pyridoxal, pyridoxamine or pyridoxine. The polypeptide is Hydroxymethylpyrimidine/phosphomethylpyrimidine kinase (thiD) (Escherichia coli (strain K12)).